The sequence spans 468 residues: Siroheme synthase 3 (468 aa).

The tract at residues 1 to 204 is precorrin-2 dehydrogenase /sirohydrochlorin ferrochelatase; sequence MDYLPIFCRL…GDSASANQLA (204 aa). Residues 22 to 23 and 43 to 44 each bind NAD(+); these read EV and PE. Ser-128 is modified (phosphoserine). Positions 216-468 are uroporphyrinogen-III C-methyltransferase; the sequence is GEVVLVGAGP…GAADAALASA (253 aa). Pro-225 provides a ligand contact to S-adenosyl-L-methionine. Asp-248 acts as the Proton acceptor in catalysis. Lys-270 acts as the Proton donor in catalysis. S-adenosyl-L-methionine-binding positions include 301–303, Ile-306, 331–332, Met-383, and Gly-412; these read GGD and TA.

It in the N-terminal section; belongs to the precorrin-2 dehydrogenase / sirohydrochlorin ferrochelatase family. The protein in the C-terminal section; belongs to the precorrin methyltransferase family.

It carries out the reaction uroporphyrinogen III + 2 S-adenosyl-L-methionine = precorrin-2 + 2 S-adenosyl-L-homocysteine + H(+). It catalyses the reaction precorrin-2 + NAD(+) = sirohydrochlorin + NADH + 2 H(+). The enzyme catalyses siroheme + 2 H(+) = sirohydrochlorin + Fe(2+). It participates in cofactor biosynthesis; adenosylcobalamin biosynthesis; precorrin-2 from uroporphyrinogen III: step 1/1. The protein operates within cofactor biosynthesis; adenosylcobalamin biosynthesis; sirohydrochlorin from precorrin-2: step 1/1. Its pathway is porphyrin-containing compound metabolism; siroheme biosynthesis; precorrin-2 from uroporphyrinogen III: step 1/1. It functions in the pathway porphyrin-containing compound metabolism; siroheme biosynthesis; siroheme from sirohydrochlorin: step 1/1. It participates in porphyrin-containing compound metabolism; siroheme biosynthesis; sirohydrochlorin from precorrin-2: step 1/1. Multifunctional enzyme that catalyzes the SAM-dependent methylations of uroporphyrinogen III at position C-2 and C-7 to form precorrin-2 via precorrin-1. Then it catalyzes the NAD-dependent ring dehydrogenation of precorrin-2 to yield sirohydrochlorin. Finally, it catalyzes the ferrochelation of sirohydrochlorin to yield siroheme. The polypeptide is Siroheme synthase 3 (Aeromonas hydrophila subsp. hydrophila (strain ATCC 7966 / DSM 30187 / BCRC 13018 / CCUG 14551 / JCM 1027 / KCTC 2358 / NCIMB 9240 / NCTC 8049)).